The chain runs to 95 residues: Putative monooxygenase YcnE (95 aa).

One can recognise an ABM domain in the interval 2 to 93 (IVLQAYIKVK…APLDVVRTEL (92 aa)). Position 24 is a phosphoserine (S24).

Belongs to the LsrG family.

Functionally, putative monooxygenase that may contribute to the degradation of aromatic compounds. The polypeptide is Putative monooxygenase YcnE (ycnE) (Bacillus subtilis (strain 168)).